A 174-amino-acid polypeptide reads, in one-letter code: 16S rRNA aminocarboxypropyltransferase (174 aa).

Positions 26, 73, 97, and 116 each coordinate S-adenosyl-L-methionine.

The protein belongs to the TDD superfamily. TSR3 family.

It localises to the cytoplasm. It carries out the reaction an N(1)-methylpseudouridine in rRNA + S-adenosyl-L-methionine = N(1)-methyl-N(3)-[(3S)-3-amino-3-carboxypropyl]pseudouridine in rRNA + S-methyl-5'-thioadenosine + H(+). Functionally, aminocarboxypropyltransferase that catalyzes the aminocarboxypropyl transfer on pseudouridine corresponding to position 914 in M.jannaschii 16S rRNA. It constitutes the last step in biosynthesis of the hypermodified N1-methyl-N3-(3-amino-3-carboxypropyl) pseudouridine (m1acp3-Psi). This chain is 16S rRNA aminocarboxypropyltransferase, found in Methanosarcina acetivorans (strain ATCC 35395 / DSM 2834 / JCM 12185 / C2A).